The sequence spans 99 residues: MNPINYLYLSALLFTIGAAGVLLRRNAIVMFMCVELMLNAVNLAFVTFARMHGHLDGQMIAFFTMVVAACEVVIGLAIIMTIFRTRKSASVDDANLLKG.

3 helical membrane-spanning segments follow: residues 3–23 (PINYLYLSALLFTIGAAGVLL), 28–48 (IVMFMCVELMLNAVNLAFVTF), and 59–79 (MIAFFTMVVAACEVVIGLAII).

It belongs to the complex I subunit 4L family. As to quaternary structure, NDH-1 is composed of 14 different subunits. Subunits NuoA, H, J, K, L, M, N constitute the membrane sector of the complex.

The protein localises to the cell membrane. The enzyme catalyses a quinone + NADH + 5 H(+)(in) = a quinol + NAD(+) + 4 H(+)(out). In terms of biological role, NDH-1 shuttles electrons from NADH, via FMN and iron-sulfur (Fe-S) centers, to quinones in the respiratory chain. The immediate electron acceptor for the enzyme in this species is believed to be a menaquinone. Couples the redox reaction to proton translocation (for every two electrons transferred, four hydrogen ions are translocated across the cytoplasmic membrane), and thus conserves the redox energy in a proton gradient. The sequence is that of NADH-quinone oxidoreductase subunit K from Mycobacterium avium (strain 104).